The following is a 299-amino-acid chain: Oxygen-dependent coproporphyrinogen-III oxidase (299 aa).

Ser-92 contacts substrate. Positions 96 and 106 each coordinate a divalent metal cation. Catalysis depends on His-106, which acts as the Proton donor. 108-110 (NVR) lines the substrate pocket. Residues His-145 and His-175 each coordinate a divalent metal cation. Residues 239-274 (YVEFNLVYDRGTLFGLQSGGRAESILMSLPPRVRWE) form an important for dimerization region. 257-259 (GGR) is a substrate binding site.

Belongs to the aerobic coproporphyrinogen-III oxidase family. As to quaternary structure, homodimer. A divalent metal cation serves as cofactor.

It localises to the cytoplasm. The enzyme catalyses coproporphyrinogen III + O2 + 2 H(+) = protoporphyrinogen IX + 2 CO2 + 2 H2O. It participates in porphyrin-containing compound metabolism; protoporphyrin-IX biosynthesis; protoporphyrinogen-IX from coproporphyrinogen-III (O2 route): step 1/1. Involved in the heme biosynthesis. Catalyzes the aerobic oxidative decarboxylation of propionate groups of rings A and B of coproporphyrinogen-III to yield the vinyl groups in protoporphyrinogen-IX. The chain is Oxygen-dependent coproporphyrinogen-III oxidase from Xanthomonas axonopodis pv. citri (strain 306).